Consider the following 90-residue polypeptide: Small ribosomal subunit protein uS19 (90 aa).

This sequence belongs to the universal ribosomal protein uS19 family.

Its function is as follows. Protein S19 forms a complex with S13 that binds strongly to the 16S ribosomal RNA. The protein is Small ribosomal subunit protein uS19 of Hydrogenovibrio crunogenus (strain DSM 25203 / XCL-2) (Thiomicrospira crunogena).